We begin with the raw amino-acid sequence, 236 residues long: LexA repressor (236 aa).

The tract at residues 1 to 25 is disordered; it reads MNDSNDTSVAGGAAGADSRVLSADS. Residues 51–71 constitute a DNA-binding region (H-T-H motif); the sequence is IREIGDAVGLTSTSSVAHQLR. Residues serine 160 and lysine 197 each act as for autocatalytic cleavage activity in the active site.

The protein belongs to the peptidase S24 family. As to quaternary structure, homodimer.

The enzyme catalyses Hydrolysis of Ala-|-Gly bond in repressor LexA.. In terms of biological role, represses a number of genes involved in the response to DNA damage (SOS response), including recA and lexA. In the presence of single-stranded DNA, RecA interacts with LexA causing an autocatalytic cleavage which disrupts the DNA-binding part of LexA, leading to derepression of the SOS regulon and eventually DNA repair. The chain is LexA repressor from Mycobacterium tuberculosis (strain ATCC 25177 / H37Ra).